The following is a 545-amino-acid chain: CTP synthase (545 aa).

The segment at 1-266 is amidoligase domain; it reads MATNYIFVTG…DSFVCDRFRL (266 aa). Ser-14 is a binding site for CTP. UTP is bound at residue Ser-14. Residues 15–20 and Asp-72 each bind ATP; that span reads SLGKGI. Asp-72 and Glu-140 together coordinate Mg(2+). CTP contacts are provided by residues 147–149, 187–192, and Lys-223; these read DIE and KTKPTQ. UTP is bound by residues 187–192 and Lys-223; that span reads KTKPTQ. 239–241 provides a ligand contact to ATP; sequence KDV. One can recognise a Glutamine amidotransferase type-1 domain in the interval 291-542; that stretch reads TIGMVGKYVE…VAAAKAYQDS (252 aa). Gly-352 is a binding site for L-glutamine. The active-site Nucleophile; for glutamine hydrolysis is the Cys-379. L-glutamine contacts are provided by residues 380 to 383, Glu-403, and Arg-470; that span reads LGMQ. Active-site residues include His-515 and Glu-517.

The protein belongs to the CTP synthase family. Homotetramer.

The enzyme catalyses UTP + L-glutamine + ATP + H2O = CTP + L-glutamate + ADP + phosphate + 2 H(+). It catalyses the reaction L-glutamine + H2O = L-glutamate + NH4(+). The catalysed reaction is UTP + NH4(+) + ATP = CTP + ADP + phosphate + 2 H(+). The protein operates within pyrimidine metabolism; CTP biosynthesis via de novo pathway; CTP from UDP: step 2/2. Its activity is regulated as follows. Allosterically activated by GTP, when glutamine is the substrate; GTP has no effect on the reaction when ammonia is the substrate. The allosteric effector GTP functions by stabilizing the protein conformation that binds the tetrahedral intermediate(s) formed during glutamine hydrolysis. Inhibited by the product CTP, via allosteric rather than competitive inhibition. Catalyzes the ATP-dependent amination of UTP to CTP with either L-glutamine or ammonia as the source of nitrogen. Regulates intracellular CTP levels through interactions with the four ribonucleotide triphosphates. The protein is CTP synthase of Haemophilus ducreyi (strain 35000HP / ATCC 700724).